The chain runs to 456 residues: Tyrosinase-like protein 2 (456 aa).

Positions 1–22 (MNTMALFGKVILLQFLIGVGFC) are cleaved as a signal peptide. Positions 145, 154, 163, 295, 299, and 322 each coordinate Cu cation.

Requires Cu(2+) as cofactor. Prismatic layer of shell (at protein level).

The protein resides in the secreted. This chain is Tyrosinase-like protein 2, found in Margaritifera margaritifera (Freshwater pearl mussel).